Reading from the N-terminus, the 958-residue chain is MEHQNAVKEALNALYHHPDDTVRVHADRWLQNFQGTLDAWQVADNLLHDSSSNLETLIFCSQTLRSKVQRDFEELPPGAFQKLRQSLTTLLKKFHKGPPKVRTQISIAVAALAVHVPAADWGDGGIISWLRDEMHMHPEYVPGFLELLTVLPEETFNYKIAARPDRRRQFEKELTSQMEAALSILSACLKISELKEQVLEAFASWLRLRHGIPGTVLACHPLVHAALSSLNCDPLSEASVNVISELIHHTASPSSGGISAQTPLIQVIVPQILSLQAHLRDSSKDEEDVKAIGRLFADVGDSYVELIATGSDEPMVIVHALLEVTAHPEFDIASMTFNFWHSLQLMLTKRESYSSLGSEASIEVERNRRLHIFQPAYQSLVSLVGFRVQYPEDYQGLSYEDLKEFKQTRYAVADVLIDAALILGGDTTLKILYMKLLEANAQTGNNFQDWRPAEAILFCIWAISNYVSVVEAEVMPQVMALLQNLPQQAQLLQTACLLVGAYSKWLNAAPASVSILPSIIRILMSGMGTSEDCAAAAALAFRHTCDDCRKNLCGYFEDLFNIYCMAINGGGGYKVSAEDSLNLVEALGMVVTELPLDQAKGALEKLCFSAASPLEEAAKEDLEKKHARELTVHIDRFAFLFRYVNHPEAVAAEINKHWAIFRVIFDARPWDMRTMESLCRACKYAVRTSGRYIIDTIGEMLEKIQFHYQQHHQPCFLYLSSEVIKIFGSDPSCAVYLKNLIETLFAHTTCLMTSIKEVTARPDIADDCFLLASRCLRYCPHLFIPSPIFPALVNCAMIGITVQHREACHSILTFLTDIFDLEKSVNEEQFVRIRDNIIIPRGATITRILIASLAGALPSSRLDTVTYSLLALTRTYRLQAVSWAKESVSLIPRTALTETESTKFLQALSDIAYGADVNSLIGQVEELSDVCRRNRTVQELVQAALKPLELNLVTAPVS.

The 68-residue stretch at 26 to 93 (ADRWLQNFQG…RQSLTTLLKK (68 aa)) folds into the Importin N-terminal domain.

Belongs to the importin beta family. Interacts with RS2Z33, RSZ21, RS31A, SR34 and RAN1.

It localises to the nucleus. Its function is as follows. Functions as a nuclear import receptor for serine-arginine rich (SR) proteins. Regulates nuclear import of SR proteins that are required for proper splicing of the two resistance (R) genes SNC1 and RPS4, a crucial step for their functions in plant immunity. This chain is Transportin MOS14, found in Arabidopsis thaliana (Mouse-ear cress).